The primary structure comprises 493 residues: Signal recognition particle subunit SRP54 3 (493 aa).

Residues 1-294 are G-domain; the sequence is MVLADVGGSI…NVEPFVARLL (294 aa). GTP is bound by residues 107 to 114, 189 to 193, and 247 to 250; these read GLQGSGKT, DTSGR, and TKLD. An M-domain region spans residues 295 to 493; the sequence is GRGDLPGLID…KMLAGMRGGA (199 aa).

The protein belongs to the GTP-binding SRP family. SRP54 subfamily. Component of a signal recognition particle (SRP) complex that consists of a 7SL RNA molecule of 300 nucleotides and six protein subunits: SRP72, SRP68, SRP54, SRP19, SRP14 and SRP9.

Its subcellular location is the cytoplasm. It is found in the endoplasmic reticulum. The enzyme catalyses GTP + H2O = GDP + phosphate + H(+). In terms of biological role, component of the signal recognition particle (SRP) complex, a ribonucleoprotein complex that mediates the cotranslational targeting of secretory and membrane proteins to the endoplasmic reticulum (ER). As part of the SRP complex, associates with the SRP receptor (SR) component SRPRA to target secretory proteins to the endoplasmic reticulum membrane. Binds to the signal sequence of presecretory proteins when they emerge from the ribosomes. Displays basal GTPase activity, and stimulates reciprocal GTPase activation of the SR subunit SRPRA. Forms a guanosine 5'-triphosphate (GTP)-dependent complex with the SR subunit SRPRA. SR compaction and GTPase mediated rearrangement of SR drive SRP-mediated cotranslational protein translocation into the ER. Requires the presence of SRP9/SRP14 and/or SRP19 to stably interact with RNA. The protein is Signal recognition particle subunit SRP54 3 (SRP54-3) of Hordeum vulgare (Barley).